The primary structure comprises 176 residues: Nascent polypeptide-associated complex subunit alpha (176 aa).

One can recognise an NAC-A/B domain in the interval 14-78; the sequence is SKNEKKAREL…AKVDDFTQRL (65 aa). Residues 85–127 are disordered; the sequence is LQQNEGVLPAGQDAVSKDPQSIQADMQAAADSATDKPSADDAV. Positions 137–176 constitute a UBA domain; that stretch reads LNADDIELVMQQAGVPRAKAAKALKEHDSDIVNAIMALSG.

The protein belongs to the NAC-alpha family. In terms of assembly, part of the nascent polypeptide-associated complex (NAC), consisting of EGD2 and EGD1. NAC associates with ribosomes via EGD1.

The protein localises to the cytoplasm. It is found in the nucleus. In terms of biological role, component of the nascent polypeptide-associated complex (NAC), a dynamic component of the ribosomal exit tunnel, protecting the emerging polypeptides from interaction with other cytoplasmic proteins to ensure appropriate nascent protein targeting. The NAC complex also promotes mitochondrial protein import by enhancing productive ribosome interactions with the outer mitochondrial membrane and blocks the inappropriate interaction of ribosomes translating non-secretory nascent polypeptides with translocation sites in the membrane of the endoplasmic reticulum. EGD2 may also be involved in transcription regulation. The chain is Nascent polypeptide-associated complex subunit alpha (EGD2) from Kluyveromyces lactis (strain ATCC 8585 / CBS 2359 / DSM 70799 / NBRC 1267 / NRRL Y-1140 / WM37) (Yeast).